A 485-amino-acid polypeptide reads, in one-letter code: Glutamyl-tRNA(Gln) amidotransferase subunit A (485 aa).

Catalysis depends on charge relay system residues K76 and S151. Catalysis depends on S175, which acts as the Acyl-ester intermediate.

The protein belongs to the amidase family. GatA subfamily. As to quaternary structure, heterotrimer of A, B and C subunits.

It catalyses the reaction L-glutamyl-tRNA(Gln) + L-glutamine + ATP + H2O = L-glutaminyl-tRNA(Gln) + L-glutamate + ADP + phosphate + H(+). Its function is as follows. Allows the formation of correctly charged Gln-tRNA(Gln) through the transamidation of misacylated Glu-tRNA(Gln) in organisms which lack glutaminyl-tRNA synthetase. The reaction takes place in the presence of glutamine and ATP through an activated gamma-phospho-Glu-tRNA(Gln). The polypeptide is Glutamyl-tRNA(Gln) amidotransferase subunit A (Methylococcus capsulatus (strain ATCC 33009 / NCIMB 11132 / Bath)).